We begin with the raw amino-acid sequence, 105 residues long: MICOS complex subunit Mic10 (105 aa).

Residues 29-46 traverse the membrane as a helical segment; sequence LLKVTGGVAIGIVASVAF. Over 47–105 the chain is Mitochondrial intermembrane; it reads FKSRSWPIWFGSGVGLGTGWSNCRHDFASPYVLHGKRVPAGQDSQGKPAYNIITEQHKQ. The segment at 85-105 is disordered; it reads PAGQDSQGKPAYNIITEQHKQ.

Belongs to the MICOS complex subunit Mic10 family. In terms of assembly, component of the mitochondrial contact site and cristae organizing system (MICOS) complex.

The protein localises to the mitochondrion inner membrane. Its function is as follows. Component of the MICOS complex, a large protein complex of the mitochondrial inner membrane that plays crucial roles in the maintenance of crista junctions, inner membrane architecture, and formation of contact sites to the outer membrane. This is MICOS complex subunit Mic10 from Caenorhabditis elegans.